A 41-amino-acid polypeptide reads, in one-letter code: Hadrurin (41 aa).

This sequence belongs to the non-disulfide-bridged peptide (NDBP) superfamily. Long chain multifunctional peptide (group 2) family. In terms of tissue distribution, expressed by the venom gland.

It is found in the secreted. Antimicrobial activity against S.typhimurium, K.pneumoniae, E.cloacae, P.aeruginosa, E.coli and S.marcescens. Also shows hemolytic activity when tested in human erythrocytes. The sequence is that of Hadrurin from Hoffmannihadrurus aztecus (Mexican scorpion).